A 327-amino-acid chain; its full sequence is DNA-directed RNA polymerase subunit alpha (327 aa).

Residues 1-233 (MQNSASEFLK…DQLSIFADLQ (233 aa)) are alpha N-terminal domain (alpha-NTD). Residues 247 to 327 (VDPILLRPVD…NWPPAGLEKP (81 aa)) form an alpha C-terminal domain (alpha-CTD) region.

It belongs to the RNA polymerase alpha chain family. Homodimer. The RNAP catalytic core consists of 2 alpha, 1 beta, 1 beta' and 1 omega subunit. When a sigma factor is associated with the core the holoenzyme is formed, which can initiate transcription.

It carries out the reaction RNA(n) + a ribonucleoside 5'-triphosphate = RNA(n+1) + diphosphate. Functionally, DNA-dependent RNA polymerase catalyzes the transcription of DNA into RNA using the four ribonucleoside triphosphates as substrates. This chain is DNA-directed RNA polymerase subunit alpha, found in Laribacter hongkongensis (strain HLHK9).